We begin with the raw amino-acid sequence, 97 residues long: YcgL domain-containing protein PputW619_3899 (97 aa).

One can recognise a YcgL domain in the interval 3–87; that stretch reads RICSIYKSPR…AEDEYIEHLP (85 aa).

The polypeptide is YcgL domain-containing protein PputW619_3899 (Pseudomonas putida (strain W619)).